We begin with the raw amino-acid sequence, 217 residues long: MVFRRYVEVGRVAYISFGPHAGKLVAIVDVIDQNRALVDGPCTRVRRQAMPFKCMQLTDFILKFPHSARQKYVRKAWEKADINTKWAATRWAKKIDARERKAKMTDFDRFKVMKAKKMRNRIIKTEVKKLQRAAILKASPKKAAVAKAAIAAAAAAAAAKAKVPAKKATGPGKKAAGQKAPAQKAAGQKAAPPAKGQKGQKTPAQKAPAPKAAGKKA.

Residue lysine 79 is modified to N6-acetyllysine. Lysine 85 is subject to N6-acetyllysine; alternate. Lysine 85 carries the post-translational modification N6-succinyllysine; alternate. Lysine 124 participates in a covalent cross-link: Glycyl lysine isopeptide (Lys-Gly) (interchain with G-Cter in SUMO2). Serine 139 is subject to Phosphoserine. The interval 162–217 (KVPAKKATGPGKKAAGQKAPAQKAAGQKAAPPAKGQKGQKTPAQKAPAPKAAGKKA) is disordered. One copy of the 1-1; approximate repeat lies at 173-177 (KKAAG). The interval 173 to 192 (KKAAGQKAPAQKAAGQKAAP) is 4 X 5 AA tandem repeats of Q-K-A-[APS]-X. 5 consecutive repeat copies span residues 178 to 182 (QKAPA), 183 to 187 (QKAAG), 188 to 192 (QKAAP), 195 to 197 (KGQ), and 198 to 200 (KGQ). Residues 195–200 (KGQKGQ) form a 2 X 3 AA tandem repeats of K-G-Q region. Residue lysine 206 is modified to N6-succinyllysine.

This sequence belongs to the eukaryotic ribosomal protein eL14 family. Component of the large ribosomal subunit.

It localises to the cytoplasm. Component of the large ribosomal subunit. The ribosome is a large ribonucleoprotein complex responsible for the synthesis of proteins in the cell. This is Large ribosomal subunit protein eL14 (Rpl14) from Mus musculus (Mouse).